The sequence spans 266 residues: Protein crossbronx-like (266 aa).

The 164-residue stretch at Lys-15–Asn-178 folds into the UBC core domain.

Belongs to the ubiquitin-conjugating enzyme family. FTS subfamily.

In Drosophila erecta (Fruit fly), this protein is Protein crossbronx-like.